The primary structure comprises 599 residues: Cytochrome P450 monooxygenase ALT8 (599 aa).

The next 2 membrane-spanning stretches (helical) occupy residues 4-21 and 36-56; these read LACV…VYLG and ILFG…PAYF. N-linked (GlcNAc...) asparagine glycosylation is present at Asn-127. Over residues 495 to 504 the composition is skewed to low complexity; it reads DDSSAASPSF. The segment at 495–522 is disordered; it reads DDSSAASPSFGGSGKRKSQYTDTHKEPS. Cys-539 contacts heme.

This sequence belongs to the cytochrome P450 family. Heme serves as cofactor.

It is found in the membrane. Its pathway is secondary metabolite biosynthesis. Its function is as follows. Cytochrome P450 monooxygenase; part of the gene cluster that mediates the biosynthesis of the host-selective toxins (HSTs) AAL-toxins, sphinganine-analog mycotoxins responsible for Alternaria stem canker on tomato by the tomato pathotype. The biosynthesis starts with the polyketide synthase ALT1-catalyzed C-16 carbon chain assembly from one starter acetyl-CoA unit with malonyl-CoA extender units. ALT1 also selectively transfers methyl groups at the first and the third cycle of chain elongation for AAL toxin. The C-16 polyketide chain is released from the enzyme by a nucleophilic attack of a carbanion, which is derived from R-carbon of glycin by decarboxylation, on the carbonyl carbon of polyketide acyl chain. This step is probably catalyzed by a pyridoxal 5'-phosphate-dependent aminoacyl transferase ALT4. The respective functions of the other enzymes encoded by the cluster have still to be elucidated. The sphingosine N-acyltransferase-like protein ALT7 seems not to act as a resistance/self-tolerance factor against the toxin in the toxin biosynthetic gene cluster, contrary to what is expected. This is Cytochrome P450 monooxygenase ALT8 from Alternaria alternata (Alternaria rot fungus).